Reading from the N-terminus, the 799-residue chain is Histidine biosynthesis trifunctional protein (799 aa).

Residues 1–229 (MVLPILPLID…FIVEQENVGF (229 aa)) are phosphoribosyl-AMP cyclohydrolase. Positions 230–312 (CHLETMSCFG…FYFALAKLVA (83 aa)) are phosphoribosyl-ATP pyrophosphohydrolase. The tract at residues 313–799 (NDVSLKDVEN…KLGLIPKDFQ (487 aa)) is histidinol dehydrogenase. The Zn(2+) site is built by Q618 and H621. Residues E687 and H688 contribute to the active site. Residues D721 and H780 each contribute to the Zn(2+) site.

In the C-terminal section; belongs to the histidinol dehydrogenase family. It depends on Zn(2+) as a cofactor.

The catalysed reaction is 1-(5-phospho-beta-D-ribosyl)-5'-AMP + H2O = 1-(5-phospho-beta-D-ribosyl)-5-[(5-phospho-beta-D-ribosylamino)methylideneamino]imidazole-4-carboxamide. It catalyses the reaction 1-(5-phospho-beta-D-ribosyl)-ATP + H2O = 1-(5-phospho-beta-D-ribosyl)-5'-AMP + diphosphate + H(+). It carries out the reaction L-histidinol + 2 NAD(+) + H2O = L-histidine + 2 NADH + 3 H(+). It functions in the pathway amino-acid biosynthesis; L-histidine biosynthesis; L-histidine from 5-phospho-alpha-D-ribose 1-diphosphate: step 2/9. It participates in amino-acid biosynthesis; L-histidine biosynthesis; L-histidine from 5-phospho-alpha-D-ribose 1-diphosphate: step 3/9. The protein operates within amino-acid biosynthesis; L-histidine biosynthesis; L-histidine from 5-phospho-alpha-D-ribose 1-diphosphate: step 9/9. The chain is Histidine biosynthesis trifunctional protein from Saccharomyces cerevisiae (strain ATCC 204508 / S288c) (Baker's yeast).